A 69-amino-acid chain; its full sequence is UPF0337 protein DIP1660 (69 aa).

Composition is skewed to basic and acidic residues over residues 1-19 (MSDF…KEAV) and 30-41 (DEGRADQTKADV). The interval 1–42 (MSDFENKIEELGGKAKEAVGEATENEQLADEGRADQTKADVK) is disordered.

The protein belongs to the UPF0337 (CsbD) family.

This chain is UPF0337 protein DIP1660, found in Corynebacterium diphtheriae (strain ATCC 700971 / NCTC 13129 / Biotype gravis).